Consider the following 494-residue polypeptide: Gram-negative bacteria-binding protein 1 (494 aa).

A signal peptide spans 1–19 (MPGLCIGILLLIGFGCTTA). A CBM39 domain is found at 20–120 (YKIPTPTVEL…QPLPVCNLGG (101 aa)). Residues asparagine 56 and asparagine 81 are each glycosylated (N-linked (GlcNAc...) asparagine). The tract at residues 126–160 (GCSPGDDDFTDDNQLSTEDSALEPTAPSVCEPSES) is disordered. The GH16 domain maps to 135 to 494 (TDDNQLSTED…DYVRVFATDN (360 aa)). Asparagine 185 is a glycosylation site (N-linked (GlcNAc...) asparagine).

This sequence belongs to the insect beta-1,3-glucan binding protein family.

The protein resides in the cell membrane. Its function is as follows. Plays a key role in innate immunity by acting as a pattern recognition receptor for beta-1,3-glucan from fungi and lipopolysaccharide from Gram-negative bacteria. Upon recognition of invading microorganism-derived products, acts upstream of protease spz processing enzyme SPE to activate the Toll pathway and to induce the expression of antimicrobial peptides drosomycin, cecropin and attacin. This Drosophila melanogaster (Fruit fly) protein is Gram-negative bacteria-binding protein 1.